Consider the following 407-residue polypeptide: Digeranylgeranylglycerophospholipid reductase (407 aa).

A15, E34, C45, A46, G48, R99, A123, D281, G293, and I294 together coordinate FAD.

The protein belongs to the geranylgeranyl reductase family. DGGGPL reductase subfamily. It depends on FAD as a cofactor.

The catalysed reaction is a 2,3-bis-O-phytanyl-sn-glycerol 1-phospholipid + 8 oxidized 2[4Fe-4S]-[ferredoxin] = a 2,3-bis-O-(geranylgeranyl)-sn-glycerol 1-phospholipid + 8 reduced 2[4Fe-4S]-[ferredoxin] + 16 H(+). It catalyses the reaction 2,3-bis-O-(phytanyl)-sn-glycerol 1-phosphate + 8 oxidized 2[4Fe-4S]-[ferredoxin] = 2,3-bis-O-(geranylgeranyl)-sn-glycerol 1-phosphate + 8 reduced 2[4Fe-4S]-[ferredoxin] + 16 H(+). It carries out the reaction a 2,3-bis-O-phytanyl-sn-glycerol 1-phospholipid + 8 A = a 2,3-bis-O-(geranylgeranyl)-sn-glycerol 1-phospholipid + 8 AH2. The enzyme catalyses CDP-2,3-bis-O-(geranylgeranyl)-sn-glycerol + 8 AH2 = CDP-2,3-bis-O-(phytanyl)-sn-glycerol + 8 A. The catalysed reaction is archaetidylserine + 8 AH2 = 2,3-bis-O-phytanyl-sn-glycero-3-phospho-L-serine + 8 A. It participates in membrane lipid metabolism; glycerophospholipid metabolism. Its function is as follows. Is involved in the reduction of 2,3-digeranylgeranylglycerophospholipids (unsaturated archaeols) into 2,3-diphytanylglycerophospholipids (saturated archaeols) in the biosynthesis of archaeal membrane lipids. Catalyzes the formation of archaetidic acid (2,3-di-O-phytanyl-sn-glyceryl phosphate) from 2,3-di-O-geranylgeranylglyceryl phosphate (DGGGP) via the hydrogenation of each double bond of the isoprenoid chains. Is also probably able to reduce double bonds of geranyl groups in CDP-2,3-bis-O-(geranylgeranyl)-sn-glycerol and archaetidylserine, thus acting at various stages in the biosynthesis of archaeal membrane lipids. The chain is Digeranylgeranylglycerophospholipid reductase from Methanosarcina mazei (strain ATCC BAA-159 / DSM 3647 / Goe1 / Go1 / JCM 11833 / OCM 88) (Methanosarcina frisia).